A 176-amino-acid chain; its full sequence is Cathelicidin-2 (176 aa).

Residues 1–29 (METQGASLSLGRWSLWLLLLGLVVPLASA) form the signal peptide. Glutamine 30 carries the post-translational modification Pyrrolidone carboxylic acid. The propeptide occupies 30–130 (QALSYREAVL…DINCNELQSV (101 aa)). Disulfide bonds link cysteine 85–cysteine 96 and cysteine 107–cysteine 124. The disordered stretch occupies residues 135-176 (PIRRPPIRPPFNPPFRPPVRPPFRPPFRPPFRPPIGPFPGRR). Over residues 141-176 (IRPPFNPPFRPPVRPPFRPPFRPPFRPPIGPFPGRR) the composition is skewed to pro residues. At proline 173 the chain carries Proline amide. A propeptide spans 174 to 176 (GRR) (removed in mature form).

Belongs to the cathelicidin family. Elastase is responsible for its maturation.

It is found in the secreted. Its function is as follows. Binds to the lipid A moiety of bacterial lipopolysaccharides (LPS), a glycolipid present in the outer membrane of all Gram-negative bacteria. Shows a potent antimicrobial activity against the Gram-negative bacteria E.coli, S.typhimurium and P.aeruginosa. Less active against the Gram-positive bacteria S.aureus, L.monocytogenes and B.subtilis. The polypeptide is Cathelicidin-2 (CATHL2) (Capra hircus (Goat)).